The following is a 542-amino-acid chain: MAKIIAFDEEARRGLERGLNILADAVKVTLGPRGRNVVLEKKWGAPTITNDGVSIAKEIELEDPYEKIGAELVKEVAKKTDEVAGDGTTTATVLAQALVREGLRNVAAGADPLSLKRGIEKAVAAVTEQLLASAKEVETKEEIAATASISAADTQIGALIAEALDKVGKEGVITVEESNTFGLELELTEGMRFDKGYISQYFVTDAERQETVLEDPYILIVSSKISNVKDMVGILEKVMQSSKSLLIIAEDVETEALATLIVNKVRGLFKSVAVKAPGFGDRRKAQLADIAILTGGQVISEEVGLSLENATVDLLGQARKVVVTKDETTIVEGAGDAEQIAGRVAQIRAEIENTDSDYDREKLQERLAKLAGGVAVIKAGSATEVELKERKHRIEDAVRNAKAAVEEGIVPGGGVALIQAGVKAFETLQLEGDEATGANIVKVAIDAPLKQIAINAGLEPGVVVDKVRGLPVGHGLNAATGVYEDLLAAGVNDPVKVTRSALQNAASIAGLFLTTEVVVADKPQKNVPAAPGGDEMGGMGGF.

Residues 29-32, 86-90, G413, 477-479, and D493 contribute to the ATP site; these read TLGP, DGTTT, and NAA.

The protein belongs to the chaperonin (HSP60) family. As to quaternary structure, forms a cylinder of 14 subunits composed of two heptameric rings stacked back-to-back. Interacts with the co-chaperonin GroES.

The protein resides in the cytoplasm. It catalyses the reaction ATP + H2O + a folded polypeptide = ADP + phosphate + an unfolded polypeptide.. Functionally, together with its co-chaperonin GroES, plays an essential role in assisting protein folding. The GroEL-GroES system forms a nano-cage that allows encapsulation of the non-native substrate proteins and provides a physical environment optimized to promote and accelerate protein folding. The polypeptide is Chaperonin GroEL 1 (Renibacterium salmoninarum (strain ATCC 33209 / DSM 20767 / JCM 11484 / NBRC 15589 / NCIMB 2235)).